A 347-amino-acid chain; its full sequence is UDP-N-acetylglucosamine--N-acetylmuramyl-(pentapeptide) pyrophosphoryl-undecaprenol N-acetylglucosamine transferase (347 aa).

Residues 11-13, asparagine 122, arginine 163, serine 189, and glutamine 279 contribute to the UDP-N-acetyl-alpha-D-glucosamine site; that span reads TGG.

The protein belongs to the glycosyltransferase 28 family. MurG subfamily.

The protein localises to the cell inner membrane. It carries out the reaction di-trans,octa-cis-undecaprenyl diphospho-N-acetyl-alpha-D-muramoyl-L-alanyl-D-glutamyl-meso-2,6-diaminopimeloyl-D-alanyl-D-alanine + UDP-N-acetyl-alpha-D-glucosamine = di-trans,octa-cis-undecaprenyl diphospho-[N-acetyl-alpha-D-glucosaminyl-(1-&gt;4)]-N-acetyl-alpha-D-muramoyl-L-alanyl-D-glutamyl-meso-2,6-diaminopimeloyl-D-alanyl-D-alanine + UDP + H(+). It functions in the pathway cell wall biogenesis; peptidoglycan biosynthesis. In terms of biological role, cell wall formation. Catalyzes the transfer of a GlcNAc subunit on undecaprenyl-pyrophosphoryl-MurNAc-pentapeptide (lipid intermediate I) to form undecaprenyl-pyrophosphoryl-MurNAc-(pentapeptide)GlcNAc (lipid intermediate II). This chain is UDP-N-acetylglucosamine--N-acetylmuramyl-(pentapeptide) pyrophosphoryl-undecaprenol N-acetylglucosamine transferase, found in Sulfurihydrogenibium sp. (strain YO3AOP1).